The chain runs to 492 residues: Cytoplasmic dynein 1 light intermediate chain 2 (492 aa).

Residue Gly61 to Thr68 coordinates ATP. Disordered stretches follow at residues Glu188–Glu207, Leu370–Ala423, and Leu437–Ala492. 3 positions are modified to phosphoserine: Ser194, Ser383, and Ser391. Residues Leu370–Ser383 are compositionally biased toward polar residues. Arg397 carries the omega-N-methylarginine modification. Residues Leu437 to Gln469 show a composition bias toward polar residues. Thr441 is modified (phosphothreonine). 2 positions are modified to phosphoserine: Ser443 and Ser446. Residues Glu471–Asp480 are compositionally biased toward basic and acidic residues. Residues Met482–Ala492 show a composition bias toward polar residues.

This sequence belongs to the dynein light intermediate chain family. Homodimer. The cytoplasmic dynein 1 complex consists of two catalytic heavy chains (HCs) and a number of non-catalytic subunits presented by intermediate chains (ICs), light intermediate chains (LICs) and light chains (LCs); the composition seems to vary in respect to the IC, LIC and LC composition. The heavy chain homodimer serves as a scaffold for the probable homodimeric assembly of the respective non-catalytic subunits. The ICs and LICs bind directly to the HC dimer and the LCs assemble on the IC dimer. Interacts with DYNC1H1; DYNC1LI1 and DYNC1LI2 bind mutually exclusive to DYNC1H.

It is found in the cytoplasm. It localises to the cytoskeleton. Functionally, acts as one of several non-catalytic accessory components of the cytoplasmic dynein 1 complex that are thought to be involved in linking dynein to cargos and to adapter proteins that regulate dynein function. Cytoplasmic dynein 1 acts as a motor for the intracellular retrograde motility of vesicles and organelles along microtubules. May play a role in binding dynein to membranous organelles or chromosomes. The polypeptide is Cytoplasmic dynein 1 light intermediate chain 2 (Dync1li2) (Mus musculus (Mouse)).